The primary structure comprises 185 residues: Ribosome maturation factor RimM (185 aa).

A PRC barrel domain is found at Glu-96 to Val-171. The disordered stretch occupies residues Ile-165–Asp-185.

Belongs to the RimM family. Binds ribosomal protein uS19.

It is found in the cytoplasm. Functionally, an accessory protein needed during the final step in the assembly of 30S ribosomal subunit, possibly for assembly of the head region. Essential for efficient processing of 16S rRNA. May be needed both before and after RbfA during the maturation of 16S rRNA. It has affinity for free ribosomal 30S subunits but not for 70S ribosomes. This is Ribosome maturation factor RimM from Maricaulis maris (strain MCS10) (Caulobacter maris).